Consider the following 154-residue polypeptide: Large ribosomal subunit protein bL17 (154 aa).

The disordered stretch occupies residues 127–154; that stretch reads TAAKQDRAKRVKGSKKAETEKEGGESAE. A compositionally biased stretch (basic and acidic residues) spans 141–154; that stretch reads KKAETEKEGGESAE.

Belongs to the bacterial ribosomal protein bL17 family. As to quaternary structure, part of the 50S ribosomal subunit. Contacts protein L32.

This Chlorobaculum parvum (strain DSM 263 / NCIMB 8327) (Chlorobium vibrioforme subsp. thiosulfatophilum) protein is Large ribosomal subunit protein bL17.